The sequence spans 173 residues: Ribosome maturation factor RimM (173 aa).

Positions 92 to 165 (EDEYYHTDLI…RVVVALPQEI (74 aa)) constitute a PRC barrel domain.

Belongs to the RimM family. Binds ribosomal protein uS19.

It is found in the cytoplasm. Its function is as follows. An accessory protein needed during the final step in the assembly of 30S ribosomal subunit, possibly for assembly of the head region. Essential for efficient processing of 16S rRNA. May be needed both before and after RbfA during the maturation of 16S rRNA. It has affinity for free ribosomal 30S subunits but not for 70S ribosomes. The protein is Ribosome maturation factor RimM of Bradyrhizobium diazoefficiens (strain JCM 10833 / BCRC 13528 / IAM 13628 / NBRC 14792 / USDA 110).